The primary structure comprises 500 residues: Perfringolysin O (500 aa).

The N-terminal stretch at 1 to 28 is a signal peptide; that stretch reads MIRFKKTKLIASIAMALCLFSQPVISFS. 4 beta stranded membrane-spanning segments follow: residues 189-202, 209-218, 287-296, and 304-316; these read KSQI…NAKV, VDFNAVANNE, SKDVQAAFKA, and KNSQ…YENS. The Conserved undecapeptide motif lies at 458–468; it reads ECTGLAWEWWR. A Cholesterol binding motif is present at residues 490 to 491; that stretch reads TL.

Belongs to the cholesterol-dependent cytolysin family. As to quaternary structure, homooligomeric pore complex of 35 to 50 subunits; when inserted in the host membrane.

The protein localises to the secreted. Its subcellular location is the host cell membrane. In terms of biological role, a cholesterol-dependent toxin that causes cytolysis by forming pores in cholesterol containing host membranes. After binding to target membranes, the protein assembles into a pre-pore complex. A conformation change leads to insertion in the host membrane and formation of an oligomeric pore complex. Cholesterol is required for binding to host cell membranes, membrane insertion and pore formation; cholesterol binding is mediated by a Thr-Leu pair in the C-terminus. Can be reversibly inactivated by oxidation. The sequence is that of Perfringolysin O (pfo) from Clostridium perfringens (strain ATCC 13124 / DSM 756 / JCM 1290 / NCIMB 6125 / NCTC 8237 / Type A).